The following is a 253-amino-acid chain: Uracil-DNA glycosylase (253 aa).

Aspartate 79 acts as the Proton acceptor in catalysis.

Belongs to the uracil-DNA glycosylase (UDG) superfamily. UNG family.

The protein resides in the cytoplasm. The catalysed reaction is Hydrolyzes single-stranded DNA or mismatched double-stranded DNA and polynucleotides, releasing free uracil.. Excises uracil residues from the DNA which can arise as a result of misincorporation of dUMP residues by DNA polymerase or due to deamination of cytosine. The chain is Uracil-DNA glycosylase from Xylella fastidiosa (strain M23).